The following is a 156-amino-acid chain: Small ribosomal subunit protein uS7 (156 aa).

Belongs to the universal ribosomal protein uS7 family. In terms of assembly, part of the 30S ribosomal subunit. Contacts proteins S9 and S11.

Its function is as follows. One of the primary rRNA binding proteins, it binds directly to 16S rRNA where it nucleates assembly of the head domain of the 30S subunit. Is located at the subunit interface close to the decoding center, probably blocks exit of the E-site tRNA. This Brevibacillus brevis (strain 47 / JCM 6285 / NBRC 100599) protein is Small ribosomal subunit protein uS7.